A 209-amino-acid polypeptide reads, in one-letter code: Large ribosomal subunit protein uL4 (209 aa).

A disordered region spans residues 45–80 (RQGTHKAKERSELSGSTRKLIRQKGSGGARRGDINS).

It belongs to the universal ribosomal protein uL4 family. In terms of assembly, part of the 50S ribosomal subunit.

Functionally, one of the primary rRNA binding proteins, this protein initially binds near the 5'-end of the 23S rRNA. It is important during the early stages of 50S assembly. It makes multiple contacts with different domains of the 23S rRNA in the assembled 50S subunit and ribosome. In terms of biological role, forms part of the polypeptide exit tunnel. This Porphyromonas gingivalis (strain ATCC BAA-308 / W83) protein is Large ribosomal subunit protein uL4.